Consider the following 674-residue polypeptide: Translation factor GUF1, mitochondrial (674 aa).

The transit peptide at 1-48 (MRGCLQPARWLTTATLRRPLLSCPRQLPTRYNPFPRPFHHAPVLQARQ) directs the protein to the mitochondrion. In terms of domain architecture, tr-type G spans 66 to 246 (ERYRNFCIVA…AIIESIPALL (181 aa)). GTP-binding positions include 75 to 82 (AHVDHGKS), 139 to 143 (DTPGH), and 193 to 196 (NKVD).

The protein belongs to the TRAFAC class translation factor GTPase superfamily. Classic translation factor GTPase family. LepA subfamily.

The protein resides in the mitochondrion inner membrane. It carries out the reaction GTP + H2O = GDP + phosphate + H(+). In terms of biological role, promotes mitochondrial protein synthesis. May act as a fidelity factor of the translation reaction, by catalyzing a one-codon backward translocation of tRNAs on improperly translocated ribosomes. Binds to mitochondrial ribosomes in a GTP-dependent manner. The polypeptide is Translation factor GUF1, mitochondrial (Arthroderma otae (strain ATCC MYA-4605 / CBS 113480) (Microsporum canis)).